Here is a 505-residue protein sequence, read N- to C-terminus: DNA primase large subunit (505 aa).

The segment at 253–270 (LSHSYTGQDYSTQKNTGK) is interdomain linker. The interval 266 to 503 (KNTGKISLDQ…LEMDLEGLEE (238 aa)) is interacts with PRIM1. Residues Cys-287, Cys-367, Cys-384, and Cys-424 each coordinate [4Fe-4S] cluster. The RNA:DNA duplex binding stretch occupies residues 300–442 (HLRHGGRMQY…NVDDCGFSLN (143 aa)). The segment at 463 to 486 (KEISQPETPQHKPSTQKTRDAASA) is disordered. A compositionally biased stretch (polar residues) spans 467 to 478 (QPETPQHKPSTQ). Thr-470 is modified (phosphothreonine).

It belongs to the eukaryotic-type primase large subunit family. As to quaternary structure, heterodimer of a catalytic subunit PRIM1 and a regulatory subunit PRIM2, also known as the DNA primase complex. Interacts via (C-terminus) with PRIM1. Component of the alpha DNA polymerase complex (also known as the alpha DNA polymerase-primase complex) consisting of four subunits: the catalytic subunit POLA1, the regulatory subunit POLA2, and the primase complex subunits PRIM1 and PRIM2 respectively. Within the complex, POLA1 directly interacts with PRIM2. Requires [4Fe-4S] cluster as cofactor.

Its function is as follows. Regulatory subunit of the DNA primase complex and component of the DNA polymerase alpha complex (also known as the alpha DNA polymerase-primase complex) which play an essential role in the initiation of DNA synthesis. During the S phase of the cell cycle, the DNA polymerase alpha complex (composed of a catalytic subunit POLA1, an accessory subunit POLA2 and two primase subunits, the catalytic subunit PRIM1 and the regulatory subunit PRIM2) is recruited to DNA at the replicative forks via direct interactions with MCM10 and WDHD1. The primase subunit of the polymerase alpha complex initiates DNA synthesis by oligomerising short RNA primers on both leading and lagging strands. These primers are initially extended by the polymerase alpha catalytic subunit and subsequently transferred to polymerase delta and polymerase epsilon for processive synthesis on the lagging and leading strand, respectively. In the primase complex, both subunits are necessary for the initial di-nucleotide formation, but the extension of the primer depends only on the catalytic subunit. Binds RNA:DNA duplex and coordinates the catalytic activities of PRIM1 and POLA2 during primase-to-polymerase switch. The protein is DNA primase large subunit (Prim2) of Mus musculus (Mouse).